We begin with the raw amino-acid sequence, 881 residues long: Putative SWI/SNF-related matrix-associated actin-dependent regulator of chromatin subfamily A member 3-like 1 (881 aa).

Residues 272-486 (DKRPDPLRGG…YSLMAFLRFE (215 aa)) form the Helicase ATP-binding domain. 285–292 (DDMGLGKT) provides a ligand contact to ATP. The interval 308–343 (STSTPTEEPLDGEGDKIEKKGKKRGRGKSSESVTRK) is disordered. Positions 437–440 (DEAH) match the DEAH box motif. An RING-type zinc finger spans residues 635–674 (CPICISPPTNIIITRCAHIFCRACILQTLQRSKPLCPLCR). A disordered region spans residues 681-703 (DLYNAPPPPPDSSNTDGEDAKSS). In terms of domain architecture, Helicase C-terminal spans 711–876 (ALLSLLMASR…EREVNVEDVV (166 aa)).

Belongs to the SNF2/RAD54 helicase family. RAD16 subfamily.

The protein localises to the nucleus. In terms of biological role, possesses intrinsic ATP-dependent nucleosome-remodeling activity. This activity may be required for transcriptional activation or repression of specific target promoters. In Arabidopsis thaliana (Mouse-ear cress), this protein is Putative SWI/SNF-related matrix-associated actin-dependent regulator of chromatin subfamily A member 3-like 1.